The following is a 428-amino-acid chain: Histidine--tRNA ligase (428 aa).

It belongs to the class-II aminoacyl-tRNA synthetase family. As to quaternary structure, homodimer.

The protein localises to the cytoplasm. It carries out the reaction tRNA(His) + L-histidine + ATP = L-histidyl-tRNA(His) + AMP + diphosphate + H(+). This Chlamydia muridarum (strain MoPn / Nigg) protein is Histidine--tRNA ligase (hisS).